Reading from the N-terminus, the 359-residue chain is Ribosomal RNA large subunit methyltransferase M (359 aa).

Residues serine 186, 219 to 222, aspartate 238, aspartate 258, and aspartate 275 each bind S-adenosyl-L-methionine; that span reads CPGG. The active-site Proton acceptor is the lysine 304.

It belongs to the class I-like SAM-binding methyltransferase superfamily. RNA methyltransferase RlmE family. RlmM subfamily. Monomer.

It is found in the cytoplasm. The catalysed reaction is cytidine(2498) in 23S rRNA + S-adenosyl-L-methionine = 2'-O-methylcytidine(2498) in 23S rRNA + S-adenosyl-L-homocysteine + H(+). Functionally, catalyzes the 2'-O-methylation at nucleotide C2498 in 23S rRNA. This is Ribosomal RNA large subunit methyltransferase M from Vibrio vulnificus (strain YJ016).